Here is a 460-residue protein sequence, read N- to C-terminus: Lipase member H-B (460 aa).

A signal peptide spans 1–26; sequence MLLSFYFNGLLLVGCLLSWGRSDTEG. Asn-67 and Asn-75 each carry an N-linked (GlcNAc...) asparagine glycan. The Nucleophile role is filled by Ser-163. Asn-177 carries an N-linked (GlcNAc...) asparagine glycan. Asp-187 functions as the Charge relay system in the catalytic mechanism. A disulfide bridge links Cys-242 with Cys-255. His-257 serves as the catalytic Charge relay system. Cystine bridges form between Cys-279–Cys-290 and Cys-293–Cys-301. N-linked (GlcNAc...) asparagine glycosylation is present at Asn-289. A glycan (N-linked (GlcNAc...) asparagine) is linked at Asn-366. Residues Cys-436 and Cys-455 are joined by a disulfide bond.

The protein belongs to the AB hydrolase superfamily. Lipase family.

The protein resides in the secreted. Its subcellular location is the cell membrane. The catalysed reaction is 1-hexadecanoyl-2-(9Z-octadecenoyl)-sn-glycero-3-phosphate + H2O = 2-(9Z-octadecenoyl)-sn-glycero-3-phosphate + hexadecanoate + H(+). In terms of biological role, hydrolyzes specifically phosphatidic acid (PA) to produce 2-acyl lysophosphatidic acid (LPA; a potent bioactive lipid mediator) and fatty acid. Does not hydrolyze other phospholipids, like phosphatidylserine (PS), phosphatidylcholine (PC) and phosphatidylethanolamine (PE) or triacylglycerol (TG). This Xenopus laevis (African clawed frog) protein is Lipase member H-B (liph-b).